The primary structure comprises 126 residues: Autophagy-related protein 8-like protein DDB_G0290491 (126 aa).

The Phosphatidylethanolamine amidated glycine moiety is linked to residue glycine 123. Residues 124-126 constitute a propeptide, removed in mature form; sequence SDI.

It belongs to the ATG8 family.

The protein resides in the membrane. This Dictyostelium discoideum (Social amoeba) protein is Autophagy-related protein 8-like protein DDB_G0290491.